Consider the following 913-residue polypeptide: Valine--tRNA ligase (913 aa).

The 'HIGH' region signature appears at 48–58; it reads PNVTGSLHMGH. The short motif at 541 to 545 is the 'KMSKS' region element; that stretch reads KMSKS. Lysine 544 provides a ligand contact to ATP. Residues 839 to 907 are a coiled coil; the sequence is VVDLEALVSK…IEHRLQSLGV (69 aa).

The protein belongs to the class-I aminoacyl-tRNA synthetase family. ValS type 1 subfamily. In terms of assembly, monomer.

It is found in the cytoplasm. It catalyses the reaction tRNA(Val) + L-valine + ATP = L-valyl-tRNA(Val) + AMP + diphosphate. Catalyzes the attachment of valine to tRNA(Val). As ValRS can inadvertently accommodate and process structurally similar amino acids such as threonine, to avoid such errors, it has a 'posttransfer' editing activity that hydrolyzes mischarged Thr-tRNA(Val) in a tRNA-dependent manner. This is Valine--tRNA ligase from Thermosynechococcus vestitus (strain NIES-2133 / IAM M-273 / BP-1).